We begin with the raw amino-acid sequence, 274 residues long: Large ribosomal subunit protein uL2cy (274 aa).

Disordered regions lie at residues 1–20 and 224–274; these read MAIH…AVDS and NPVD…RRSK.

The protein belongs to the universal ribosomal protein uL2 family. In terms of assembly, part of the 50S ribosomal subunit.

It is found in the plastid. Its subcellular location is the chloroplast. The polypeptide is Large ribosomal subunit protein uL2cy (rpl2-B) (Populus alba (White poplar)).